The primary structure comprises 775 residues: Semaphorin-3E (775 aa).

The signal sequence occupies residues 1–25 (MASAGHIITLLLWGYLLELWTGGHT). In terms of domain architecture, Sema spans 32–516 (RLRLSHKELL…SASAVAQVRF (485 aa)). N-linked (GlcNAc...) asparagine glycosylation is present at Asn-44. The cysteines at positions 105 and 115 are disulfide-linked. Asn-126 is a glycosylation site (N-linked (GlcNAc...) asparagine). 4 cysteine pairs are disulfide-bonded: Cys-133/Cys-142, Cys-270/Cys-382, Cys-294/Cys-342, and Cys-519/Cys-537. Residue Asn-330 is glycosylated (N-linked (GlcNAc...) asparagine). An Ig-like C2-type domain is found at 581–669 (ALDKTEEHLA…SFVHTVRKIT (89 aa)). N-linked (GlcNAc...) asparagine glycans are attached at residues Asn-595 and Asn-596. Cys-654 and Cys-729 are oxidised to a cystine. The segment at 742–775 (LKMSPSKWKYANPQEKKLRSKPEHYRLPRHTLDS) is disordered. Residues 755–775 (QEKKLRSKPEHYRLPRHTLDS) are compositionally biased toward basic and acidic residues.

It belongs to the semaphorin family. As to quaternary structure, interacts with PLXND1.

Its subcellular location is the secreted. Functionally, plays an important role in signaling via the cell surface receptor PLXND1. Mediates reorganization of the actin cytoskeleton, leading to the retraction of cell projections. Promotes focal adhesion disassembly and inhibits adhesion of endothelial cells to the extracellular matrix. Regulates angiogenesis, both during embryogenesis and after birth. Can down-regulate sprouting angiogenesis. Required for normal vascular patterning during embryogenesis. Plays an important role in ensuring the specificity of synapse formation. This is Semaphorin-3E (SEMA3E) from Homo sapiens (Human).